A 699-amino-acid chain; its full sequence is Elongation factor G (699 aa).

One can recognise a tr-type G domain in the interval 8–288 (EDYRNFGIMA…AVVDYLPSPM (281 aa)). GTP-binding positions include 17–24 (AHIDAGKT), 86–90 (DTPGH), and 140–143 (NKMD).

This sequence belongs to the TRAFAC class translation factor GTPase superfamily. Classic translation factor GTPase family. EF-G/EF-2 subfamily.

It is found in the cytoplasm. Its function is as follows. Catalyzes the GTP-dependent ribosomal translocation step during translation elongation. During this step, the ribosome changes from the pre-translocational (PRE) to the post-translocational (POST) state as the newly formed A-site-bound peptidyl-tRNA and P-site-bound deacylated tRNA move to the P and E sites, respectively. Catalyzes the coordinated movement of the two tRNA molecules, the mRNA and conformational changes in the ribosome. This Rhizobium johnstonii (strain DSM 114642 / LMG 32736 / 3841) (Rhizobium leguminosarum bv. viciae) protein is Elongation factor G.